Reading from the N-terminus, the 881-residue chain is Phosphoenolpyruvate carboxylase (881 aa).

Active-site residues include H139 and K544.

This sequence belongs to the PEPCase type 1 family. It depends on Mg(2+) as a cofactor.

It carries out the reaction oxaloacetate + phosphate = phosphoenolpyruvate + hydrogencarbonate. Its function is as follows. Forms oxaloacetate, a four-carbon dicarboxylic acid source for the tricarboxylic acid cycle. The chain is Phosphoenolpyruvate carboxylase from Marinobacter nauticus (strain ATCC 700491 / DSM 11845 / VT8) (Marinobacter aquaeolei).